Here is a 333-residue protein sequence, read N- to C-terminus: MQSSVNEFLTPRHIDVQVVSQTRAKITLEPLERGFGHTLGNALRRILLSSMPGCAVVEAEIDGVLHEYSAIEGVQEDVIEILLNLKGLAIKLHGRDEVTLTLAKKGSGVVTAADIQLDHDVEIINGDHVIANLADNGALNMKLKVARGRGYEPADARQSDEDESRSIGRLQLDASFSPVRRVSYVVENARVEQRTNLDKLVLDLETNGTLDPEEAIRRAATILQQQLAAFVDLKGDSEPVVEEQEDEIDPILLRPVDDLELTVRSANCLKAENIYYIGDLIQRTEVELLKTPNLGKKSLTEIKDVLASRGLSLGMRLDNWPPASLKKDDKATA.

The tract at residues 1 to 234 (MQSSVNEFLT…QQLAAFVDLK (234 aa)) is alpha N-terminal domain (alpha-NTD). The interval 248 to 333 (IDPILLRPVD…SLKKDDKATA (86 aa)) is alpha C-terminal domain (alpha-CTD).

Belongs to the RNA polymerase alpha chain family. Homodimer. The RNAP catalytic core consists of 2 alpha, 1 beta, 1 beta' and 1 omega subunit. When a sigma factor is associated with the core the holoenzyme is formed, which can initiate transcription.

It carries out the reaction RNA(n) + a ribonucleoside 5'-triphosphate = RNA(n+1) + diphosphate. Functionally, DNA-dependent RNA polymerase catalyzes the transcription of DNA into RNA using the four ribonucleoside triphosphates as substrates. This is DNA-directed RNA polymerase subunit alpha from Pseudomonas aeruginosa (strain UCBPP-PA14).